The sequence spans 129 residues: uncharacterized protein (129 aa).

Residues 103–125 (AISSAFQYGLSTSNFFFIFLYIF) form a helical membrane-spanning segment.

Its subcellular location is the membrane. This is an uncharacterized protein from Acanthamoeba polyphaga (Amoeba).